We begin with the raw amino-acid sequence, 483 residues long: UDP-N-acetylmuramoylalanine--D-glutamate ligase (483 aa).

Glycine 119–threonine 125 provides a ligand contact to ATP.

This sequence belongs to the MurCDEF family.

It localises to the cytoplasm. It carries out the reaction UDP-N-acetyl-alpha-D-muramoyl-L-alanine + D-glutamate + ATP = UDP-N-acetyl-alpha-D-muramoyl-L-alanyl-D-glutamate + ADP + phosphate + H(+). Its pathway is cell wall biogenesis; peptidoglycan biosynthesis. Its function is as follows. Cell wall formation. Catalyzes the addition of glutamate to the nucleotide precursor UDP-N-acetylmuramoyl-L-alanine (UMA). The sequence is that of UDP-N-acetylmuramoylalanine--D-glutamate ligase from Mycolicibacterium vanbaalenii (strain DSM 7251 / JCM 13017 / BCRC 16820 / KCTC 9966 / NRRL B-24157 / PYR-1) (Mycobacterium vanbaalenii).